Here is a 281-residue protein sequence, read N- to C-terminus: Elongation factor 1-delta (281 aa).

N-acetylalanine is present on Ala2. Lys17 is modified (N6-acetyllysine). 5 positions are modified to phosphoserine: Ser37, Ser44, Ser60, Ser86, and Ser106. Residues 80-115 (LIVRIASLEVENQNLRGVVQDLQQAISKLEVRLSTL) are leucine-zipper. An N6-acetyllysine modification is found at Lys107. A compositionally biased stretch (polar residues) spans 115–132 (LEKSSPTHRATAPQTQHV). Positions 115–172 (LEKSSPTHRATAPQTQHVSPMRQVEPPAKKGATPAEDDEDNDIDLFGSDEEEEDKEAA) are disordered. Lys117 is modified (N6-acetyllysine; alternate). The residue at position 117 (Lys117) is an N6-succinyllysine; alternate. Ser119 bears the Phosphoserine mark. Phosphothreonine is present on Thr129. Ser133 carries the post-translational modification Phosphoserine. Phosphothreonine is present on Thr147. The segment covering 149–169 (AEDDEDNDIDLFGSDEEEEDK) has biased composition (acidic residues). Ser162 is modified (phosphoserine; by CK2). A catalytic (GEF) region spans residues 173–281 (RLREERLRQY…SVDIAAFNKI (109 aa)).

Belongs to the EF-1-beta/EF-1-delta family. EF-1 is composed of 4 subunits: alpha, beta, delta isoform 1, and gamma. Isoform 2 interacts with HSF1 and NFE2L2.

Its subcellular location is the nucleus. EF-1-beta and EF-1-delta stimulate the exchange of GDP bound to EF-1-alpha to GTP, regenerating EF-1-alpha for another round of transfer of aminoacyl-tRNAs to the ribosome. Functionally, regulates induction of heat-shock-responsive genes through association with heat shock transcription factors and direct DNA-binding at heat shock promoter elements (HSE). The polypeptide is Elongation factor 1-delta (Eef1d) (Rattus norvegicus (Rat)).